The following is a 145-amino-acid chain: Basic phospholipase A2 S6-45 (145 aa).

Residues 1 to 19 (MYPAHLLVLLAVCVSLLGA) form the signal peptide. Positions 20–27 (SDIPPQPL) are excised as a propeptide. 7 disulfides stabilise this stretch: Cys-38–Cys-99, Cys-54–Cys-144, Cys-56–Cys-72, Cys-71–Cys-127, Cys-78–Cys-120, Cys-88–Cys-113, and Cys-106–Cys-118. Residues Tyr-55, Gly-57, and Gly-59 each contribute to the Ca(2+) site. The active site involves His-75. Ca(2+) is bound at residue Asp-76. The active site involves Asp-121.

It belongs to the phospholipase A2 family. Group I subfamily. D49 sub-subfamily. Ca(2+) serves as cofactor. As to expression, expressed by the venom gland.

Its subcellular location is the secreted. It catalyses the reaction a 1,2-diacyl-sn-glycero-3-phosphocholine + H2O = a 1-acyl-sn-glycero-3-phosphocholine + a fatty acid + H(+). Functionally, snake venom phospholipase A2 (PLA2) that inhibits collagen-induced platelet aggregation. PLA2 catalyzes the calcium-dependent hydrolysis of the 2-acyl groups in 3-sn-phosphoglycerides. The sequence is that of Basic phospholipase A2 S6-45 from Austrelaps superbus (Lowland copperhead snake).